Reading from the N-terminus, the 109-residue chain is Beta-keratin-related protein (109 aa).

Ser2 is subject to N-acetylserine.

Belongs to the avian keratin family.

The polypeptide is Beta-keratin-related protein (BKJ) (Coturnix japonica (Japanese quail)).